A 349-amino-acid polypeptide reads, in one-letter code: GTPase Obg (349 aa).

In terms of domain architecture, Obg spans 1 to 159 (MKFLDEAKVY…RWIWLRLKLI (159 aa)). An OBG-type G domain is found at 160 to 327 (ADAGLVGLPN…ALRALVAVIG (168 aa)). GTP-binding positions include 166-173 (GLPNAGKS), 191-195 (FTTLH), 212-215 (DIPG), 279-282 (NKID), and 308-310 (SGV). Mg(2+) is bound by residues S173 and T193.

Belongs to the TRAFAC class OBG-HflX-like GTPase superfamily. OBG GTPase family. Monomer. The cofactor is Mg(2+).

Its subcellular location is the cytoplasm. An essential GTPase which binds GTP, GDP and possibly (p)ppGpp with moderate affinity, with high nucleotide exchange rates and a fairly low GTP hydrolysis rate. Plays a role in control of the cell cycle, stress response, ribosome biogenesis and in those bacteria that undergo differentiation, in morphogenesis control. The chain is GTPase Obg from Rhodopseudomonas palustris (strain BisA53).